The following is a 654-amino-acid chain: tRNA uridine 5-carboxymethylaminomethyl modification enzyme MnmG (654 aa).

Residue 17–22 (GGGHAG) participates in FAD binding. An NAD(+)-binding site is contributed by 289–303 (GPRYCPSIEDKIVKF).

This sequence belongs to the MnmG family. In terms of assembly, homodimer. Heterotetramer of two MnmE and two MnmG subunits. FAD is required as a cofactor.

It localises to the cytoplasm. NAD-binding protein involved in the addition of a carboxymethylaminomethyl (cmnm) group at the wobble position (U34) of certain tRNAs, forming tRNA-cmnm(5)s(2)U34. This chain is tRNA uridine 5-carboxymethylaminomethyl modification enzyme MnmG, found in Prochlorococcus marinus subsp. pastoris (strain CCMP1986 / NIES-2087 / MED4).